Consider the following 146-residue polypeptide: MQLNTIKPAIGSTKNRKRIGRGVGSGHGKTATKGHKGQKARSGGSVKPGFEGGQMPMHRRLPKRGFTPLSKKDYALVNLCQLEVFEAGSVIDAEALLKSGIISGVRDGIKVLATGDITRALTIKAHKFSASAREKITAAGGSIEEI.

A disordered region spans residues 1-64; that stretch reads MQLNTIKPAI…MPMHRRLPKR (64 aa). Residues 30-39 show a composition bias toward basic residues; sequence TATKGHKGQK.

Belongs to the universal ribosomal protein uL15 family. In terms of assembly, part of the 50S ribosomal subunit.

Functionally, binds to the 23S rRNA. This is Large ribosomal subunit protein uL15 from Geobacter sp. (strain M21).